A 288-amino-acid polypeptide reads, in one-letter code: HTH-type transcriptional regulator CzcR (288 aa).

An HTH lysR-type domain is found at 1–58; that stretch reads MELRDLQIFKCVAHHKSITGAAKELNYVQSNVTARIKQLENELKTPLFNRHKKGVSLS. The H-T-H motif DNA-binding region spans 18-37; that stretch reads ITGAAKELNYVQSNVTARIK.

It belongs to the LysR transcriptional regulatory family.

In Bacillus subtilis (strain 168), this protein is HTH-type transcriptional regulator CzcR (czcR).